Here is a 498-residue protein sequence, read N- to C-terminus: tRNA-2-methylthio-N(6)-dimethylallyladenosine synthase (498 aa).

The MTTase N-terminal domain maps to 2–118 (PRYSITTFGC…LPGLLGDLAI (117 aa)). Cysteine 11, cysteine 47, cysteine 81, cysteine 163, cysteine 167, and cysteine 170 together coordinate [4Fe-4S] cluster. The Radical SAM core domain maps to 149–393 (PRAAPTAFVT…FEESEALLAA (245 aa)). The TRAM domain maps to 396 to 467 (SALVGTTQEV…KHSLQAELTE (72 aa)). Residues 469–498 (ARAAARPRQRGGLEPRPARRSLPVVAAEGG) are disordered.

It belongs to the methylthiotransferase family. MiaB subfamily. In terms of assembly, monomer. [4Fe-4S] cluster serves as cofactor.

Its subcellular location is the cytoplasm. It carries out the reaction N(6)-dimethylallyladenosine(37) in tRNA + (sulfur carrier)-SH + AH2 + 2 S-adenosyl-L-methionine = 2-methylsulfanyl-N(6)-dimethylallyladenosine(37) in tRNA + (sulfur carrier)-H + 5'-deoxyadenosine + L-methionine + A + S-adenosyl-L-homocysteine + 2 H(+). In terms of biological role, catalyzes the methylthiolation of N6-(dimethylallyl)adenosine (i(6)A), leading to the formation of 2-methylthio-N6-(dimethylallyl)adenosine (ms(2)i(6)A) at position 37 in tRNAs that read codons beginning with uridine. In Sorangium cellulosum (strain So ce56) (Polyangium cellulosum (strain So ce56)), this protein is tRNA-2-methylthio-N(6)-dimethylallyladenosine synthase.